Reading from the N-terminus, the 411-residue chain is Adenylosuccinate synthetase (411 aa).

Residues 11–17 and 39–41 each bind GTP; these read GDEGKGK and GHT. Catalysis depends on aspartate 12, which acts as the Proton acceptor. Aspartate 12 and glycine 39 together coordinate Mg(2+). Residues 12–15, 37–40, threonine 121, arginine 135, glutamine 215, threonine 230, and arginine 294 each bind IMP; these read DEGK and NAGH. Histidine 40 (proton donor) is an active-site residue. 290–296 is a binding site for substrate; the sequence is TTTKRPR. Residues arginine 296, 322 to 324, and 400 to 402 each bind GTP; these read KLD and STS.

The protein belongs to the adenylosuccinate synthetase family. In terms of assembly, homodimer. The cofactor is Mg(2+).

The protein localises to the cytoplasm. The enzyme catalyses IMP + L-aspartate + GTP = N(6)-(1,2-dicarboxyethyl)-AMP + GDP + phosphate + 2 H(+). It participates in purine metabolism; AMP biosynthesis via de novo pathway; AMP from IMP: step 1/2. Functionally, plays an important role in the de novo pathway of purine nucleotide biosynthesis. Catalyzes the first committed step in the biosynthesis of AMP from IMP. The sequence is that of Adenylosuccinate synthetase from Helicobacter pylori (strain P12).